The chain runs to 598 residues: Aspartate--tRNA(Asp/Asn) ligase (598 aa).

Glutamate 174 lines the L-aspartate pocket. Residues 198-201 (QQLK) are aspartate. An L-aspartate-binding site is contributed by arginine 220. ATP-binding positions include 220–222 (RDE) and glutamine 229. Histidine 458 provides a ligand contact to L-aspartate. Glutamate 492 provides a ligand contact to ATP. Arginine 499 lines the L-aspartate pocket. 544 to 547 (GIDR) lines the ATP pocket.

Belongs to the class-II aminoacyl-tRNA synthetase family. Type 1 subfamily. Homodimer.

The protein localises to the cytoplasm. The enzyme catalyses tRNA(Asx) + L-aspartate + ATP = L-aspartyl-tRNA(Asx) + AMP + diphosphate. Aspartyl-tRNA synthetase with relaxed tRNA specificity since it is able to aspartylate not only its cognate tRNA(Asp) but also tRNA(Asn). Reaction proceeds in two steps: L-aspartate is first activated by ATP to form Asp-AMP and then transferred to the acceptor end of tRNA(Asp/Asn). The polypeptide is Aspartate--tRNA(Asp/Asn) ligase (Dehalococcoides mccartyi (strain ATCC BAA-2100 / JCM 16839 / KCTC 5957 / BAV1)).